Reading from the N-terminus, the 129-residue chain is Probable tautomerase YrdN (129 aa).

The active-site Proton acceptor; via imino nitrogen is P2.

This sequence belongs to the 4-oxalocrotonate tautomerase family.

Functionally, putative target of GltR. The protein is Probable tautomerase YrdN (yrdN) of Bacillus subtilis (strain 168).